The following is a 201-amino-acid chain: Small ribosomal subunit protein uS4c (201 aa).

One can recognise an S4 RNA-binding domain in the interval 89–149 (MRLDNILFRL…DKPKSGALIK (61 aa)).

This sequence belongs to the universal ribosomal protein uS4 family. Part of the 30S ribosomal subunit. Contacts protein S5. The interaction surface between S4 and S5 is involved in control of translational fidelity.

It is found in the plastid. One of the primary rRNA binding proteins, it binds directly to 16S rRNA where it nucleates assembly of the body of the 30S subunit. Functionally, with S5 and S12 plays an important role in translational accuracy. The polypeptide is Small ribosomal subunit protein uS4c (rps4) (Cuscuta exaltata (Tall dodder)).